The chain runs to 163 residues: Nucleotide-binding protein RBAM_011030 (163 aa).

Belongs to the YajQ family.

Its function is as follows. Nucleotide-binding protein. This is Nucleotide-binding protein RBAM_011030 from Bacillus velezensis (strain DSM 23117 / BGSC 10A6 / LMG 26770 / FZB42) (Bacillus amyloliquefaciens subsp. plantarum).